Reading from the N-terminus, the 160-residue chain is MAPK regulated corepressor interacting protein 2 (160 aa).

The residue at position 1 (Met-1) is an N-acetylmethionine. The interval 1-64 is disordered; the sequence is MYTITKGPSK…GPWPLSSPGP (64 aa). At Arg-35 the chain carries Omega-N-methylarginine. Positions 37-61 are enriched in pro residues; it reads PAPPTSQPPRAQPFAQPPGPWPLSS. At Ser-61 the chain carries Phosphoserine. At Arg-65 the chain carries Omega-N-methylarginine. Ser-82 carries the post-translational modification Phosphoserine.

Belongs to the MCRIP family. In terms of assembly, interacts with DDX6. Interacts with MCRIP1.

It localises to the cytoplasm. The protein resides in the stress granule. Its subcellular location is the nucleus. The polypeptide is MAPK regulated corepressor interacting protein 2 (MCRIP2) (Homo sapiens (Human)).